Consider the following 817-residue polypeptide: MYGVCGCCGALRPRYKRLVDNIFPEDPEDGLVKTNMEKLTFYALSAPEKLDRIGAYLSERLIRDVGRHRYGYVCIAMEALDQLLMACHCQSINLFVESFLKMVAKLLESEKPNLQILGTNSFVKFANIEEDTPSYHRSYDFFVSRFSEMCHSSHDDLEIKTKIRMSGIKGLQGVVRKTVNDELQANIWDPQHMDKIVPSLLFNLQHVEEAESRSPSPLQAPEKEKESPAELAERCLRELLGRAAFGNIKNAIKPVLIHLDNHSLWEPKVFAIRCFKIIMYSIQPQHSHLVIQQLLGHLDANSRSAATVRAGIVEVLSEAAVIAATGSVGPTVLEMFNTLLRQLRLSIDYALTGSYDGAVSLGTKIIKEHEERMFQEAVIKTVGSFASTLPTYQRSEVILFIMSKVPRPSLHQAVDTGRTGENRNRLTQIMLLKSLLQVSTGFQCNNMMSALPSNFLDRLLSTALMEDAEIRLFVLEILISFIDRHGNRHKFSTISTLSDISVLKLKVDKCSRQDTVFMKKHSQQLYRHIYLSCKEETNVQKHYEALYGLLALISIELANEEVVVDLIRLVLAVQDVAQVNEENLPVYNRCALYALGAAYLNLISQLTTVPAFCQHIHEVIETRKKEAPYMLPEDVFVERPRLSQNLDGVVIELLFRQSKISEVLGGSGYNSDRLCLPYIPQLTDEDRLSKRRSIGETISLQVEVESRNSPEKEERVPAEEITYETLKKAIVDSVAVEEQERERRRQVVEKFQKAPFEEIAAHCGARASLLQSKLNQIFEITIRPPPSPSGTITAAYGQPQNHSIPVYEMKFPDLCVY.

Ser-212, Ser-214, and Ser-216 each carry phosphoserine.

The protein belongs to the EFR3 family. As to quaternary structure, component of a phosphatidylinositol 4-kinase (PI4K) complex, composed of PI4KA, EFR3 (EFR3A or EFR3B), TTC7 (TTC7A or TTC7B) and HYCC (HYCC1 or HYCC2). In terms of processing, palmitoylated at its N-terminus, anchoring the protein to the plasma membrane.

It is found in the cell membrane. Its subcellular location is the cytoplasm. It localises to the cytosol. In terms of biological role, component of a complex required to localize phosphatidylinositol 4-kinase (PI4K) to the plasma membrane. The complex acts as a regulator of phosphatidylinositol 4-phosphate (PtdIns(4)P) synthesis. In the complex, EFR3B probably acts as the membrane-anchoring component. Also involved in responsiveness to G-protein-coupled receptors; it is however unclear whether this role is direct or indirect. In Homo sapiens (Human), this protein is Protein EFR3 homolog B.